The sequence spans 297 residues: Signal-transducing adaptor protein 1 (297 aa).

In terms of domain architecture, PH spans 25–121 (PLYFEGFLLV…WRGFILTVTE (97 aa)). Phosphotyrosine is present on Tyr-170. One can recognise an SH2 domain in the interval 179 to 273 (ECFYAVSRKE…GNLRPFIHSA (95 aa)). The segment at 271-297 (HSADDNFGQDPNIEDRSEKFKKNPHNA) is disordered.

In terms of assembly, interacts with URI1; the interaction is phosphorylation-dependent occurs in a growth-dependent manner. Interacts with KIT and CSF1R. Phosphorylated on tyrosine by TEC. Phosphorylated on tyrosine by KIT. In terms of tissue distribution, expression restricted to the bone marrow.

The protein resides in the nucleus. It localises to the cytoplasm. Its subcellular location is the mitochondrion. May function as an adapter molecule downstream of KIT in the proliferation or differentiation of hematopoietic stem cells. The chain is Signal-transducing adaptor protein 1 (Stap1) from Mus musculus (Mouse).